The chain runs to 1224 residues: Dynactin subunit 1 (1224 aa).

The span at 1–10 (MAQSRRHPHG) shows a compositional bias: basic residues. The interval 1 to 30 (MAQSRRHPHGRASSAGPRMSTEASSKPLKV) is disordered. Residues 49-91 (GATLXATGKWVGVILDEAKGKNDGTVQGRKYFTCEENHGIFVR) enclose the CAP-Gly domain. Disordered regions lie at residues 100-217 (DGAD…RSQV), 374-402 (SASE…RQQR), and 888-918 (PHCH…PPAE). Over residues 117-146 (VPKRHSRXAAKGSKLRGAKPKKTTARRPKP) the composition is skewed to basic residues. Positions 148-180 (RTPTSAPSSGTAGPSGSASASGGEMSSSEPSTP) are enriched in low complexity. Positions 205-540 (SPTKEEENLR…QEASAEKQQQ (336 aa)) form a coiled coil. Residues 207–217 (TKEEENLRSQV) show a composition bias toward basic and acidic residues. Coiled coils occupy residues 936-1042 (LKLE…EGLR) and 1081-1117 (KDSP…LELA). Residues 1203-1224 (WCSSSRARASPPASACSPPRPS) are disordered. A compositionally biased stretch (low complexity) spans 1204–1224 (CSSSRARASPPASACSPPRPS).

This sequence belongs to the dynactin 150 kDa subunit family. Monomer and homodimer. Subunit of dynactin, a multiprotein complex part of a tripartite complex with dynein and a adapter, such as BICDL1, BICD2 or HOOK3. The dynactin complex is built around ACTR1A/ACTB filament and consists of an actin-related filament composed of a shoulder domain, a pointed end and a barbed end. Its length is defined by its flexible shoulder domain. The soulder is composed of 2 DCTN1 subunits, 4 DCTN2 and 2 DCTN3. DCTN1/p150(glued) binds directly to microtubules and to cytoplasmic dynein. Ubiquitously expressed.

Its subcellular location is the cytoplasm. The protein resides in the cytoskeleton. It localises to the microtubule organizing center. It is found in the centrosome. The protein localises to the centriole. Its subcellular location is the spindle. The protein resides in the cell cortex. Part of the dynactin complex that activates the molecular motor dynein for ultra-processive transport along microtubules. Plays a key role in dynein-mediated retrograde transport of vesicles and organelles along microtubules by recruiting and tethering dynein to microtubules. Binds to both dynein and microtubules providing a link between specific cargos, microtubules and dynein. Essential for targeting dynein to microtubule plus ends, recruiting dynein to membranous cargos and enhancing dynein processivity (the ability to move along a microtubule for a long distance without falling off the track). Can also act as a brake to slow the dynein motor during motility along the microtubule. Can regulate microtubule stability by promoting microtubule formation, nucleation and polymerization and by inhibiting microtubule catastrophe in neurons. Inhibits microtubule catastrophe by binding both to microtubules and to tubulin, leading to enhanced microtubule stability along the axon. Plays a role in metaphase spindle orientation. Plays a role in centriole cohesion and subdistal appendage organization and function. Its recruitment to the centriole in a KIF3A-dependent manner is essential for the maintenance of centriole cohesion and the formation of subdistal appendage. Also required for microtubule anchoring at the mother centriole. Plays a role in primary cilia formation. This Gallus gallus (Chicken) protein is Dynactin subunit 1 (DCTN1).